Here is a 564-residue protein sequence, read N- to C-terminus: Proline--tRNA ligase (564 aa).

The protein belongs to the class-II aminoacyl-tRNA synthetase family. ProS type 1 subfamily. Homodimer.

It is found in the cytoplasm. It carries out the reaction tRNA(Pro) + L-proline + ATP = L-prolyl-tRNA(Pro) + AMP + diphosphate. In terms of biological role, catalyzes the attachment of proline to tRNA(Pro) in a two-step reaction: proline is first activated by ATP to form Pro-AMP and then transferred to the acceptor end of tRNA(Pro). As ProRS can inadvertently accommodate and process non-cognate amino acids such as alanine and cysteine, to avoid such errors it has two additional distinct editing activities against alanine. One activity is designated as 'pretransfer' editing and involves the tRNA(Pro)-independent hydrolysis of activated Ala-AMP. The other activity is designated 'posttransfer' editing and involves deacylation of mischarged Ala-tRNA(Pro). The misacylated Cys-tRNA(Pro) is not edited by ProRS. The polypeptide is Proline--tRNA ligase (Thermosipho melanesiensis (strain DSM 12029 / CIP 104789 / BI429)).